Here is a 247-residue protein sequence, read N- to C-terminus: 14-3-3 protein zeta (247 aa).

This sequence belongs to the 14-3-3 family. Homodimer.

It is found in the cytoplasm. Its function is as follows. Adapter protein implicated in the regulation of a large spectrum of both general and specialized signaling pathways. Binds to a large number of partners, usually by recognition of a phosphoserine or phosphothreonine motif. Binding generally results in the modulation of the activity of the binding partner. The chain is 14-3-3 protein zeta (14-3-3zeta) from Bombyx mori (Silk moth).